The following is a 251-amino-acid chain: uncharacterized protein (251 aa).

The interval 207-251 (ATPHSKRGRTKLYRKEPPGDNRSPPPWQEPHGEGLAEKLSPGPAR) is disordered.

This is an uncharacterized protein from Treponema pallidum (strain Nichols).